The following is a 67-amino-acid chain: MENGFVNFYDHVKGYGFIRRERGRDVFFRYDDFLFLGHDVDICKGILVRFKLEKTDKGFKAVAIQKV.

Residues 1 to 66 (MENGFVNFYD…KGFKAVAIQK (66 aa)) enclose the CSD domain.

Probable cold shock-like component of antiviral defense system retron Se72, composed of a non-coding RNA (ncRNA), a reverse transcriptase (RT) and this protein. Expression of retron Se72 confers protection against bacteriophage lambda. At multiplicity of infection (MOI) of 0.02 cultures slow growth when infected with lambda but do not collapse, at MOI 2 cultures enter growth stasis. The sequence is that of Retron Se72 cold shock-like protein from Salmonella heidelberg (strain 579083-10).